The chain runs to 1342 residues: MVYSYTEKKRIRKSFGKRPQVLNVPYLLTIQLDSFDKFIQRDPDGQQGLEAAFRSIFPIVSNNGNTELQYVSYQLGEPVFDVRECQIRGTTYAASLRVKLRLVSYDKDAASGTIKDIKEQEVYMGEIPLMTSNGTFVINGTERVVVSQLHRSPGVFFDSDKGKTHSSGKVLYNARIIPYRGSWLDFEFDPKDNLYARIDRRRKLPATIILRALNYTTEEILDLFFDKVSFEIKDNKLLMTLVPERLRGETASFDIEANGKVYIERGRRITARHIKALEKDKITQVEVPTEYIVGKVSAKDYVDLTTGEIICPANMEISLELLEKLSQAGYKNIETLFTNDLDFGPYISETLRVDPSYDRLSALVEIYRMMRPGEPPTKEAAEGLFDNLFFSSERYDLSAVGRMKFNRSLGIEDTTGSGTLSKEDIVNVMRKLIDIRNGRGEVDDIDHLGNRRIRSVGEMAENQFRIGLVRVERAVKERLSLGDLESVTPQDLINAKPISAAVKEFFGSSQLSQFMDQNNPLSEVTHKRRISALGPGGLTRERAGFEVRDVHATHYGRVCPIETPEGPNIGLINSLSVYARTNDYGFLETPYRKVVNGQVTEEIEYLSAIEEGKYVIAQANSNLDNELRFTDAFVTCRGEHGESGLYRPEEIHYMDVSTQQVVSVAAALIPFLEHDDANRALMGANMQRQAVPTLRADKPLVGTGMEKPVALDSGVAVVAKRGGTIQYVDASRIVVKVNEDETIAGEAGIDIYNLIKYTRSNQNTCINQIPCVQLGEPIERGEILADGPSTDLGELALGQNMRVAFMPWNGYNFEDSMLVSERVVQEDRFTTIHIQELSCVARDTKLGSEEITADIPNVGEAALSKLDESGIVYIGAEVKGGDILVGKVTPKGETQLTPEEKLLRAIFGEKASDVKDSSLRVPNGTSGTVIDVQVFTRDGVEKDKRALEIEEMQLKQAKKDLVEELEILEAGLFARVRNLLLSGGFNDKQLENLDRTQWLEQTLVDEDKQNQLEQLAEQYEELRKDFEHKLEIKRSKIIQGDDLAPGVLKVVKVYLAVKRQIQPGDKMAGRHGNKGVISKINPVEDMPYDENGQPVDIVLNPLGVPSRMNIGQILETHLGLAAKGIGDQINAMIKQKQDVEKLRGYIQKAYDLGDGSQKVDLSTFTDEEVLRLAKNLRKGMPLATPVFDGAHEKEIKALLELGGLPTSGQIILFDGRTGEKFERPVTVGYMYMLKLNHLVDDKMHARSTGSYSLVTQQPLGGKAQFGGQRFGEMEVWALEAYGAAYTLQEMLTVKSDDVNGRTKMYKNIVGGTHQMDPGTPESFNVIMKEIRSLGINIDLDEE.

It belongs to the RNA polymerase beta chain family. The RNAP catalytic core consists of 2 alpha, 1 beta, 1 beta' and 1 omega subunit. When a sigma factor is associated with the core the holoenzyme is formed, which can initiate transcription.

The enzyme catalyses RNA(n) + a ribonucleoside 5'-triphosphate = RNA(n+1) + diphosphate. DNA-dependent RNA polymerase catalyzes the transcription of DNA into RNA using the four ribonucleoside triphosphates as substrates. This Histophilus somni (strain 2336) (Haemophilus somnus) protein is DNA-directed RNA polymerase subunit beta.